The following is a 123-amino-acid chain: Small ribosomal subunit protein uS12 (123 aa).

The disordered stretch occupies residues 1–22 (MATINQLVRQPRKRSVEKSDVP). Position 89 is a 3-methylthioaspartic acid (Asp89). A disordered region spans residues 100–123 (GSLDTSGVKGRNQGRSKYGTKRPK). Positions 111–123 (NQGRSKYGTKRPK) are enriched in basic residues.

The protein belongs to the universal ribosomal protein uS12 family. Part of the 30S ribosomal subunit. Contacts proteins S8 and S17. May interact with IF1 in the 30S initiation complex.

With S4 and S5 plays an important role in translational accuracy. Functionally, interacts with and stabilizes bases of the 16S rRNA that are involved in tRNA selection in the A site and with the mRNA backbone. Located at the interface of the 30S and 50S subunits, it traverses the body of the 30S subunit contacting proteins on the other side and probably holding the rRNA structure together. The combined cluster of proteins S8, S12 and S17 appears to hold together the shoulder and platform of the 30S subunit. The protein is Small ribosomal subunit protein uS12 of Pseudomonas putida (strain GB-1).